The chain runs to 618 residues: MSFRQISSSFRSSSGSSCGGGGGRGASRGSMRSSFGRSSRAGGESRFGSSSGFGGGGFSACGTGGGGSFGSSYGGGYGRGFSAGSSSGMFGGSSRGCFGGGSGGGFGGGSGGGFGGGFGGGFGGGSGGGEGSILNTNEKVVMQNLNSRLASYMDKVQELEEDNANLEKQIQEWYSRKGNRVFQKDYSHYYNTIEDLKDRIVDLTARNNKALIDMDNTRMTLGDFRVKLEMEQSLPQGVDADINGLQKVLDDINMEKSDLEIQFDSLDDELKALKKSHKEEMNQLTGLNDGDVNVEINVAPSTDLTQVLNDMREEYEHLISKNRQDIEQHYESQMTQIEHQLTNSGPEMETNMKQVSQLQHSVQELNIELQTQLTTKSALEKALEDTKNRYCGQLQQIREQISEMEAQLAQVRAETECQNQEYGLLLSIKTRLEKEIETYRKLLEGGQQDFESSGAGQIGFGSGKGGQRGSGGSYGGGSGDSYEGESGGSYGGGSGGSHGGKSGGSYGGGSSSGGGSGGSYGGGSGGSHGGKSGGSHGGGSGGSYGGGSGSGGESGGSYGGGSGGSHGGQKGGSGGSYEGGSGGSYGGGSGSGGGSGGSYGGGNTRPSQSQSSQIPRLR.

The tract at residues 1 to 49 is disordered; the sequence is MSFRQISSSFRSSSGSSCGGGGGRGASRGSMRSSFGRSSRAGGESRFGS. The tract at residues 1–137 is head; the sequence is MSFRQISSSF…GGEGSILNTN (137 aa). The segment covering 7–16 has biased composition (low complexity); the sequence is SSSFRSSSGS. A phosphoserine mark is found at S14 and S17. Gly residues predominate over residues 17–26; sequence SCGGGGGRGA. The segment covering 27–49 has biased composition (low complexity); it reads SRGSMRSSFGRSSRAGGESRFGS. A coil 1A region spans residues 138–173; that stretch reads EKVVMQNLNSRLASYMDKVQELEEDNANLEKQIQEW. Residues 138–450 form the IF rod domain; the sequence is EKVVMQNLNS…KLLEGGQQDF (313 aa). The interval 174-192 is linker 1; the sequence is YSRKGNRVFQKDYSHYYNT. The segment at 193 to 284 is coil 1B; that stretch reads IEDLKDRIVD…KSHKEEMNQL (92 aa). Positions 285–307 are linker 12; that stretch reads TGLNDGDVNVEINVAPSTDLTQV. The segment at 308 to 446 is coil 2; it reads LNDMREEYEH…ETYRKLLEGG (139 aa). The tract at residues 447–609 is tail; sequence QQDFESSGAG…GGGNTRPSQS (163 aa). The interval 449–618 is disordered; that stretch reads DFESSGAGQI…SQSSQIPRLR (170 aa). Gly residues predominate over residues 456–603; it reads GQIGFGSGKG…GSGGSYGGGN (148 aa). Low complexity predominate over residues 607 to 618; that stretch reads SQSQSSQIPRLR.

Belongs to the intermediate filament family. Heterotetramer of two type I and two type II keratins. In terms of tissue distribution, expressed in the perinuclear ring of spermatid manchettes within testis and in keratinocytes of the suprabasal layer of footpad epidermis (at protein level).

May serve an important special function either in the mature palmar and plantar skin tissue or in the morphogenetic program of the formation of these tissues. Plays a role in keratin filament assembly. May be involved in spermatid nuclear shaping and sperm development. This is Keratin, type I cytoskeletal 9 (Krt9) from Rattus norvegicus (Rat).